We begin with the raw amino-acid sequence, 469 residues long: MTIHQSPEAFGYDAFLRQHQNKEVLRFITCGSVDDGKSTLIGRLLHDTKQIFDDQVTALQRDSRKHGTQGGEVDFALLVDGLQAEREQGITIDVAYRFFSTDRRSFIVADTPGHEQYTRNMATGASTADLAVILVDARHGLTRQSRRHALLVSLLGIRRVALAINKMDLVGWSQDKFEAIVSGFQAFAAPLNFTEVRAIPLSAKNGDNVVLPGTAATWYTDVPLLRYLEEVPVKSEERAAAFRMPVQWVNRPNSDFRGFSGLIASGSVAPGDAVTVAPSGKTSTIARIFTADGDLERASEGQSVTLVLADEVDASRGAVIATSDAPLTLTDSLDVRLFWAAESDLVPGANLWAKVGTQTVNAVVKAVHRRIDPETGQAGPADKLAVNDIGDVTLTLDRQIAVDPYAENRDTGSLILIDRETTDTAALGLVQTIVASSKVAPAPTASVTASAEPARSGGLLAGLKRLFGG.

The region spanning 22-237 (KEVLRFITCG…LEEVPVKSEE (216 aa)) is the tr-type G domain. Residues 31 to 38 (GSVDDGKS) form a G1 region. 31-38 (GSVDDGKS) provides a ligand contact to GTP. A G2 region spans residues 89–93 (GITID). The segment at 110–113 (DTPG) is G3. GTP is bound by residues 110–114 (DTPGH) and 165–168 (NKMD). The tract at residues 165–168 (NKMD) is G4. Positions 202–204 (SAK) are G5.

The protein belongs to the TRAFAC class translation factor GTPase superfamily. Classic translation factor GTPase family. CysN/NodQ subfamily. As to quaternary structure, heterodimer composed of CysD, the smaller subunit, and CysN.

The catalysed reaction is sulfate + ATP + H(+) = adenosine 5'-phosphosulfate + diphosphate. It participates in sulfur metabolism; hydrogen sulfide biosynthesis; sulfite from sulfate: step 1/3. With CysD forms the ATP sulfurylase (ATPS) that catalyzes the adenylation of sulfate producing adenosine 5'-phosphosulfate (APS) and diphosphate, the first enzymatic step in sulfur assimilation pathway. APS synthesis involves the formation of a high-energy phosphoric-sulfuric acid anhydride bond driven by GTP hydrolysis by CysN coupled to ATP hydrolysis by CysD. The polypeptide is Sulfate adenylyltransferase subunit 1 (Methylorubrum extorquens (strain CM4 / NCIMB 13688) (Methylobacterium extorquens)).